We begin with the raw amino-acid sequence, 162 residues long: Large ribosomal subunit protein bL17 (162 aa).

Positions 125–140 (AAKEAPAKEVAEEKAA) are enriched in basic and acidic residues. The tract at residues 125 to 162 (AAKEAPAKEVAEEKAAKPAKKAAPKKAEKEEAEDAAEA) is disordered.

The protein belongs to the bacterial ribosomal protein bL17 family. In terms of assembly, part of the 50S ribosomal subunit. Contacts protein L32.

The chain is Large ribosomal subunit protein bL17 from Oleidesulfovibrio alaskensis (strain ATCC BAA-1058 / DSM 17464 / G20) (Desulfovibrio alaskensis).